Reading from the N-terminus, the 483-residue chain is tRNA sulfurtransferase (483 aa).

In terms of domain architecture, THUMP spans 61–165 (PLVADALTLI…NDRLLLITER (105 aa)). ATP-binding positions include 183-184 (LI), lysine 265, glycine 287, and glutamine 296. The cysteines at positions 344 and 457 are disulfide-linked. A Rhodanese domain is found at 405–483 (LGSGDVVLDI…GFQNVKVYRP (79 aa)). The active-site Cysteine persulfide intermediate is the cysteine 457.

The protein belongs to the ThiI family.

It localises to the cytoplasm. The enzyme catalyses [ThiI sulfur-carrier protein]-S-sulfanyl-L-cysteine + a uridine in tRNA + 2 reduced [2Fe-2S]-[ferredoxin] + ATP + H(+) = [ThiI sulfur-carrier protein]-L-cysteine + a 4-thiouridine in tRNA + 2 oxidized [2Fe-2S]-[ferredoxin] + AMP + diphosphate. The catalysed reaction is [ThiS sulfur-carrier protein]-C-terminal Gly-Gly-AMP + S-sulfanyl-L-cysteinyl-[cysteine desulfurase] + AH2 = [ThiS sulfur-carrier protein]-C-terminal-Gly-aminoethanethioate + L-cysteinyl-[cysteine desulfurase] + A + AMP + 2 H(+). Its pathway is cofactor biosynthesis; thiamine diphosphate biosynthesis. In terms of biological role, catalyzes the ATP-dependent transfer of a sulfur to tRNA to produce 4-thiouridine in position 8 of tRNAs, which functions as a near-UV photosensor. Also catalyzes the transfer of sulfur to the sulfur carrier protein ThiS, forming ThiS-thiocarboxylate. This is a step in the synthesis of thiazole, in the thiamine biosynthesis pathway. The sulfur is donated as persulfide by IscS. This chain is tRNA sulfurtransferase, found in Sodalis glossinidius (strain morsitans).